The chain runs to 471 residues: Histidinol dehydrogenase (471 aa).

3 residues coordinate NAD(+): Y139, Q204, and N236. Positions 259, 281, and 284 each coordinate substrate. The Zn(2+) site is built by Q281 and H284. Catalysis depends on proton acceptor residues E350 and H351. Residues H351, D384, E438, and H443 each contribute to the substrate site. Position 384 (D384) interacts with Zn(2+). A Zn(2+)-binding site is contributed by H443.

The protein belongs to the histidinol dehydrogenase family. Requires Zn(2+) as cofactor.

The enzyme catalyses L-histidinol + 2 NAD(+) + H2O = L-histidine + 2 NADH + 3 H(+). Its pathway is amino-acid biosynthesis; L-histidine biosynthesis; L-histidine from 5-phospho-alpha-D-ribose 1-diphosphate: step 9/9. Catalyzes the sequential NAD-dependent oxidations of L-histidinol to L-histidinaldehyde and then to L-histidine. The sequence is that of Histidinol dehydrogenase from Bifidobacterium longum (strain NCC 2705).